An 838-amino-acid chain; its full sequence is RNA-binding protein 5 (838 aa).

Residues 1–86 form a disordered region; sequence MGSDKRVSRS…EDGYHSDGDY (86 aa). Positions 103 to 183 constitute an RRM 1 domain; it reads KTIMLRGLPI…KTIAMHYSNP (81 aa). The segment at 186–215 adopts a RanBP2-type zinc-finger fold; the sequence is KFEDWLCNKCGLYNFRRRLKCFRCGAAKAE. The RRM 2 domain maps to 242 to 326; that stretch reads SAIILRNIGP…KTVGVDFAKS (85 aa). 2 stretches are compositionally biased toward polar residues: residues 396 to 406 and 416 to 439; these read QTGAAEQSTAP and ATTS…TQSG. 2 disordered regions span residues 396-473 and 524-561; these read QTGA…YSVP and AADG…AQQI. Low complexity predominate over residues 440-462; sequence TSTAANTTPASTTSTTEEAAPPN. Residues 531–540 show a composition bias toward polar residues; it reads SGAQPNGANA. Residues 671–696 form a C2H2-type zinc finger; the sequence is LACLLCRRQFPNKDALTRHQQLSDLH. The 47-residue stretch at 766-812 folds into the G-patch domain; that stretch reads NSNIGNKMLQAMGWKEGSGLGRKSQGITAPIQAQVRMRGAGLGAKGS.

Belongs to the RBM5/RBM10 family. Component of the spliceosome A complex (also known as the prespliceosome). Appears to dissociate from the spliceosome upon formation of the spliceosome B complex (also known as the precatalytic spliceosome), in which the heterotrimeric U4/U6.U5 snRNPs are bound.

It localises to the nucleus. Its function is as follows. Component of the spliceosome A complex. Regulates alternative splicing of a number of mRNAs. May modulate splice site pairing after recruitment of the U1 and U2 snRNPs to the 5' and 3' splice sites of the intron. This chain is RNA-binding protein 5 (rbm5), found in Xenopus tropicalis (Western clawed frog).